The chain runs to 344 residues: Phosphoribosylformylglycinamidine cyclo-ligase (344 aa).

It belongs to the AIR synthase family.

Its subcellular location is the cytoplasm. It carries out the reaction 2-formamido-N(1)-(5-O-phospho-beta-D-ribosyl)acetamidine + ATP = 5-amino-1-(5-phospho-beta-D-ribosyl)imidazole + ADP + phosphate + H(+). The protein operates within purine metabolism; IMP biosynthesis via de novo pathway; 5-amino-1-(5-phospho-D-ribosyl)imidazole from N(2)-formyl-N(1)-(5-phospho-D-ribosyl)glycinamide: step 2/2. In Neisseria meningitidis serogroup C / serotype 2a (strain ATCC 700532 / DSM 15464 / FAM18), this protein is Phosphoribosylformylglycinamidine cyclo-ligase.